Reading from the N-terminus, the 391-residue chain is UPF0229 protein CA_C0580 (391 aa).

Disordered stretches follow at residues 1-20 and 75-109; these read MAIF…TIGD and VGSG…NSEG. The segment covering 96 to 106 has biased composition (gly residues); it reads GSKGKGKGAGN.

This sequence belongs to the UPF0229 family.

The chain is UPF0229 protein CA_C0580 from Clostridium acetobutylicum (strain ATCC 824 / DSM 792 / JCM 1419 / IAM 19013 / LMG 5710 / NBRC 13948 / NRRL B-527 / VKM B-1787 / 2291 / W).